Reading from the N-terminus, the 718-residue chain is Acetolactate synthase, mitochondrial (718 aa).

Disordered stretches follow at residues M1 to P53 and Q75 to P99. A compositionally biased stretch (polar residues) spans R32–A45. Low complexity predominate over residues S76–P99. A thiamine diphosphate-binding site is contributed by E173. Residue R275 participates in FAD binding. A disordered region spans residues V301 to G326. Low complexity predominate over residues S306 to P325. Residues H397 to R418 and E449 to D468 contribute to the FAD site. A thiamine pyrophosphate binding region spans residues Q541–F621. Residues D592 and N619 each coordinate Mg(2+).

Belongs to the TPP enzyme family. Requires Mg(2+) as cofactor. Thiamine diphosphate is required as a cofactor.

The protein resides in the mitochondrion. The enzyme catalyses 2 pyruvate + H(+) = (2S)-2-acetolactate + CO2. It participates in amino-acid biosynthesis; L-isoleucine biosynthesis; L-isoleucine from 2-oxobutanoate: step 1/4. The protein operates within amino-acid biosynthesis; L-valine biosynthesis; L-valine from pyruvate: step 1/4. This chain is Acetolactate synthase, mitochondrial (ILV2), found in Cryptococcus neoformans var. grubii serotype A (strain H99 / ATCC 208821 / CBS 10515 / FGSC 9487) (Filobasidiella neoformans var. grubii).